Reading from the N-terminus, the 251-residue chain is 2,3-bisphosphoglycerate-dependent phosphoglycerate mutase (251 aa).

Substrate-binding positions include 11-18, 24-25, R63, 90-93, K101, 117-118, and 184-185; these read RHGESDWN, TG, ERHY, RR, and GN. The Tele-phosphohistidine intermediate role is filled by H12. Catalysis depends on E90, which acts as the Proton donor/acceptor.

This sequence belongs to the phosphoglycerate mutase family. BPG-dependent PGAM subfamily.

The enzyme catalyses (2R)-2-phosphoglycerate = (2R)-3-phosphoglycerate. It participates in carbohydrate degradation; glycolysis; pyruvate from D-glyceraldehyde 3-phosphate: step 3/5. Functionally, catalyzes the interconversion of 2-phosphoglycerate and 3-phosphoglycerate. The protein is 2,3-bisphosphoglycerate-dependent phosphoglycerate mutase of Mycobacterium ulcerans (strain Agy99).